A 420-amino-acid polypeptide reads, in one-letter code: Serine/threonine-protein kinase PCRK2 (420 aa).

The interval 1–64 (MKCFLFPLGD…SNTSMSAREN (64 aa)) is disordered. The segment covering 22–36 (SPTSNFSDVNKSGSD) has biased composition (polar residues). Residues 42 to 58 (VSGTSTVSSTGRNSNTS) are compositionally biased toward low complexity. Thr70 carries the post-translational modification Phosphothreonine. Residues 81–366 (FSRSGMIGEG…EVLEMVTKIV (286 aa)) form the Protein kinase domain. ATP contacts are provided by residues 87–95 (IGEGGFGCV) and Lys115. A Phosphotyrosine modification is found at Tyr164. Asp215 functions as the Proton acceptor in the catalytic mechanism. Ser219 and Ser249 each carry phosphoserine. Phosphothreonine is present on residues Thr250 and Thr255. A Phosphotyrosine modification is found at Tyr263. The disordered stretch occupies residues 369-396 (SSPGNGGKKPQLVPLKSQETSRVEEGKN). Basic and acidic residues predominate over residues 387–396 (ETSRVEEGKN).

Belongs to the protein kinase superfamily. Ser/Thr protein kinase family. In terms of assembly, interacts with FLS2.

It localises to the cell membrane. The enzyme catalyses L-seryl-[protein] + ATP = O-phospho-L-seryl-[protein] + ADP + H(+). The catalysed reaction is L-threonyl-[protein] + ATP = O-phospho-L-threonyl-[protein] + ADP + H(+). Functionally, functions redundantly with PCRK1 in basal resistance against bacterial pathogens and in regulation of plant immunity. Functions together with PCRK1 downstream of the pathogen-associated molecular pattern (PAMP) receptor FLS2. Contributes to the induction of SARD1 and CBP60G, which are transcriptional activator of ICS1, an enzyme involved in salicylate (SA) biosynthesis upon pathogen attack. The sequence is that of Serine/threonine-protein kinase PCRK2 from Arabidopsis thaliana (Mouse-ear cress).